We begin with the raw amino-acid sequence, 434 residues long: Maltoporin (434 aa).

Residues 1–25 form the signal peptide; the sequence is MMTTLRKLPLALAIAAGVLTTQAMA.

It belongs to the porin LamB (TC 1.B.3) family. As to quaternary structure, homotrimer formed of three 18-stranded antiparallel beta-barrels, containing three independent channels.

The protein localises to the cell outer membrane. The catalysed reaction is beta-maltose(in) = beta-maltose(out). Functionally, involved in the transport of maltose and maltodextrins. This is Maltoporin from Serratia proteamaculans (strain 568).